Here is a 110-residue protein sequence, read N- to C-terminus: Transmembrane protein 233 (110 aa).

Positions 1–32 (MSQYASRSDSKGALDSSSPEAYTEDDKTEEDI) are disordered. Residues 1 to 42 (MSQYASRSDSKGALDSSSPEAYTEDDKTEEDIPAPSNYLWLT) lie on the Cytoplasmic side of the membrane. A compositionally biased stretch (acidic residues) spans 22-32 (YTEDDKTEEDI). Residues 43–63 (IISCFCPAYPVNIVALVFSIM) constitute an intramembrane region (helical). Residues 64–85 (SLNSYNDGDYEGARRLGRNAKW) lie on the Cytoplasmic side of the membrane. The chain crosses the membrane as a helical span at residues 86–106 (VAIASIIIGLVIIGVSCAVHF). Topologically, residues 107–110 (SRNP) are extracellular.

Belongs to the CD225/Dispanin family. As to quaternary structure, interacts with the giant stinging tree toxin ExTxA (P0DQP3). Interacts with Nav1.7/SCN9A. Interacts with Nav1.1/SCN1A, Nav1.2/SCN2A, Nav1.3/SCN3A, Nav1.4/SCN4A, Nav1.5/SCN5A, and Nav1.6/SCN8A. Probably expressed in nociceptive neurons. Detected in dorsal root ganglion neurons.

Its subcellular location is the membrane. Functionally, probable accessory protein of voltage-gated sodium channels. The chain is Transmembrane protein 233 from Mus musculus (Mouse).